The chain runs to 357 residues: Phosphoribosylformylglycinamidine cyclo-ligase (357 aa).

Belongs to the AIR synthase family.

Its subcellular location is the cytoplasm. It carries out the reaction 2-formamido-N(1)-(5-O-phospho-beta-D-ribosyl)acetamidine + ATP = 5-amino-1-(5-phospho-beta-D-ribosyl)imidazole + ADP + phosphate + H(+). Its pathway is purine metabolism; IMP biosynthesis via de novo pathway; 5-amino-1-(5-phospho-D-ribosyl)imidazole from N(2)-formyl-N(1)-(5-phospho-D-ribosyl)glycinamide: step 2/2. This chain is Phosphoribosylformylglycinamidine cyclo-ligase, found in Rhizobium leguminosarum.